A 271-amino-acid polypeptide reads, in one-letter code: Type III pantothenate kinase (271 aa).

ATP is bound at residue 5 to 12 (DISNSVTK). Substrate-binding positions include Y85 and 92-95 (GADR). The active-site Proton acceptor is the D94. A K(+)-binding site is contributed by D114. Residue T117 participates in ATP binding. T169 is a substrate binding site.

This sequence belongs to the type III pantothenate kinase family. In terms of assembly, homodimer. The cofactor is NH4(+). Requires K(+) as cofactor.

The protein localises to the cytoplasm. It carries out the reaction (R)-pantothenate + ATP = (R)-4'-phosphopantothenate + ADP + H(+). It participates in cofactor biosynthesis; coenzyme A biosynthesis; CoA from (R)-pantothenate: step 1/5. Catalyzes the phosphorylation of pantothenate (Pan), the first step in CoA biosynthesis. In Methylacidiphilum infernorum (isolate V4) (Methylokorus infernorum (strain V4)), this protein is Type III pantothenate kinase.